Here is a 555-residue protein sequence, read N- to C-terminus: Meiotic mRNA stability protein kinase SSN3 (555 aa).

Residues 75 to 463 (YEVIGYIAAG…AFNALEHKYF (389 aa)) form the Protein kinase domain. 81-89 (IAAGTYGKV) contacts ATP. The span at 100–138 (TNSANGSSLNGTNAKIPQFDSTQPKSSSSMDMQANTNAL) shows a compositional bias: polar residues. The tract at residues 100–166 (TNSANGSSLN…REDVSPHYNS (67 aa)) is disordered. ATP is bound at residue lysine 183. Aspartate 286 functions as the Proton acceptor in the catalytic mechanism.

The protein belongs to the protein kinase superfamily. CMGC Ser/Thr protein kinase family. CDC2/CDKX subfamily. In terms of assembly, component of the SRB8-11 complex which consists of SRB8, SSN2/SRB9, SSN3/SRB10 and SSN8/SRB11. The SRB8-11 complex associates with the Mediator complex. The SSN3/SRB10 and SSN8/SRB11 kinase-cyclin pair also associate with the RNA polymerase II holoenzyme. Interacts with TUP1.

The protein resides in the nucleus. The catalysed reaction is L-seryl-[protein] + ATP = O-phospho-L-seryl-[protein] + ADP + H(+). The enzyme catalyses L-threonyl-[protein] + ATP = O-phospho-L-threonyl-[protein] + ADP + H(+). It carries out the reaction [DNA-directed RNA polymerase] + ATP = phospho-[DNA-directed RNA polymerase] + ADP + H(+). Functionally, component of the SRB8-11 complex. The SRB8-11 complex is a regulatory module of the Mediator complex which is itself involved in regulation of basal and activated RNA polymerase II-dependent transcription. The SRB8-11 complex may be involved in the transcriptional repression of a subset of genes regulated by Mediator. It may inhibit the association of the Mediator complex with RNA polymerase II to form the holoenzyme complex. The SRB8-11 complex phosphorylates the C-terminal domain (CTD) of the largest subunit of RNA polymerase II RPB1 at serines 2 and 5. The SSN3/SRB10 and SSN8/SRB11 kinase-cyclin pair may also positively and negatively regulate numerous transcriptional activators in response to changes in nutritional and physiological conditions. Phosphorylates GCN4, promoting its ubiquitin-mediated degradation, and MSN2, promoting its nuclear exclusion. Phosphorylates STE12, thereby promoting its degradation and inhibition of filamentous growth. Phosphorylates GAL4, and this phosphorylation is required for efficient galactose-inducible transcription. Also phosphorylates BDF1 and the TAF2 subunit of the TFIID complex. In Saccharomyces cerevisiae (strain ATCC 204508 / S288c) (Baker's yeast), this protein is Meiotic mRNA stability protein kinase SSN3 (SSN3).